The chain runs to 29 residues: Protein Tat (29 aa).

The disordered stretch occupies residues 1 to 29 (PSSQPRGDPTGQEEPKKKVEKKTTTDPFD). Positions 6 to 8 (RGD) match the Cell attachment site motif. Residues 13–29 (EEPKKKVEKKTTTDPFD) are compositionally biased toward basic and acidic residues.

It belongs to the lentiviruses Tat family. In terms of assembly, interacts with host CCNT1. Associates with the P-TEFb complex composed at least of Tat, P-TEFb (CDK9 and CCNT1), TAR RNA, RNA Pol II. Recruits the HATs CREBBP, TAF1/TFIID, EP300, PCAF and GCN5L2. Interacts with host KAT5/Tip60; this interaction targets the latter to degradation. Interacts with the host deacetylase SIRT1. Interacts with host capping enzyme RNGTT; this interaction stimulates RNGTT. Binds to host KDR, and to the host integrins ITGAV/ITGB3 and ITGA5/ITGB1. Interacts with host KPNB1/importin beta-1 without previous binding to KPNA1/importin alpha-1. Interacts with EIF2AK2. Interacts with host nucleosome assembly protein NAP1L1; this interaction may be required for the transport of Tat within the nucleus, since the two proteins interact at the nuclear rim. Interacts with host C1QBP/SF2P32; this interaction involves lysine-acetylated Tat. Interacts with the host chemokine receptors CCR2, CCR3 and CXCR4. Interacts with host DPP4/CD26; this interaction may trigger an anti-proliferative effect. Interacts with host LDLR. Interacts with the host extracellular matrix metalloproteinase MMP1. Interacts with host PRMT6; this interaction mediates Tat's methylation. Interacts with, and is ubiquitinated by MDM2/Hdm2. Interacts with host PSMC3 and HTATIP2. Interacts with STAB1; this interaction may overcome SATB1-mediated repression of IL2 and IL2RA (interleukin) in T cells by binding to the same domain than HDAC1. Interacts (when acetylated) with human CDK13, thereby increasing HIV-1 mRNA splicing and promoting the production of the doubly spliced HIV-1 protein Nef. Post-translationally, acetylation by EP300, CREBBP, GCN5L2/GCN5 and PCAF regulates the transactivation activity of Tat. In terms of processing, phosphorylated by EIF2AK2 on serine and threonine residues adjacent to the basic region important for TAR RNA binding and function. Phosphorylation of Tat by EIF2AK2 is dependent on the prior activation of EIF2AK2 by dsRNA. Asymmetrical arginine methylation by host PRMT6 seems to diminish the transactivation capacity of Tat and affects the interaction with host CCNT1. Post-translationally, polyubiquitination by MDM2 does not target Tat to degradation, but activates its transactivation function and fosters interaction with CCNT1 and TAR RNA.

Its subcellular location is the host nucleus. It is found in the host nucleolus. It localises to the host cytoplasm. The protein localises to the secreted. In terms of biological role, transcriptional activator that increases RNA Pol II processivity, thereby increasing the level of full-length viral transcripts. Recognizes a hairpin structure at the 5'-LTR of the nascent viral mRNAs referred to as the transactivation responsive RNA element (TAR) and recruits the cyclin T1-CDK9 complex (P-TEFb complex) that will in turn hyperphosphorylate the RNA polymerase II to allow efficient elongation. The CDK9 component of P-TEFb and other Tat-activated kinases hyperphosphorylate the C-terminus of RNA Pol II that becomes stabilized and much more processive. Other factors such as HTATSF1/Tat-SF1, SUPT5H/SPT5, and HTATIP2 are also important for Tat's function. Besides its effect on RNA Pol II processivity, Tat induces chromatin remodeling of proviral genes by recruiting the histone acetyltransferases (HATs) CREBBP, EP300 and PCAF to the chromatin. This also contributes to the increase in proviral transcription rate, especially when the provirus integrates in transcriptionally silent region of the host genome. To ensure maximal activation of the LTR, Tat mediates nuclear translocation of NF-kappa-B by interacting with host RELA. Through its interaction with host TBP, Tat may also modulate transcription initiation. Tat can reactivate a latently infected cell by penetrating in it and transactivating its LTR promoter. In the cytoplasm, Tat is thought to act as a translational activator of HIV-1 mRNAs. Extracellular circulating Tat can be endocytosed by surrounding uninfected cells via the binding to several surface receptors such as CD26, CXCR4, heparan sulfate proteoglycans (HSPG) or LDLR. Neurons are rarely infected, but they internalize Tat via their LDLR. Endosomal low pH allows Tat to cross the endosome membrane to enter the cytosol and eventually further translocate into the nucleus, thereby inducing severe cell dysfunctions ranging from cell activation to cell death. Through its interaction with nuclear HATs, Tat is potentially able to control the acetylation-dependent cellular gene expression. Tat seems to inhibit the HAT activity of KAT5/Tip60 and TAF1, and consequently modify the expression of specific cellular genes. Modulates the expression of many cellular genes involved in cell survival, proliferation or in coding for cytokines (such as IL10) or cytokine receptors. May be involved in the derepression of host interleukin IL2 expression. Mediates the activation of cyclin-dependent kinases and dysregulation of microtubule network. Tat plays a role in T-cell and neurons apoptosis. Tat induced neurotoxicity and apoptosis probably contribute to neuroAIDS. Host extracellular matrix metalloproteinase MMP1 cleaves Tat and decreases Tat's mediated neurotoxicity. Circulating Tat also acts as a chemokine-like and/or growth factor-like molecule that binds to specific receptors on the surface of the cells, affecting many cellular pathways. In the vascular system, Tat binds to ITGAV/ITGB3 and ITGA5/ITGB1 integrins dimers at the surface of endothelial cells and competes with bFGF for heparin-binding sites, leading to an excess of soluble bFGF. Binds to KDR/VEGFR-2. All these Tat-mediated effects enhance angiogenesis in Kaposi's sarcoma lesions. In Homo sapiens (Human), this protein is Protein Tat.